The chain runs to 660 residues: Bifunctional polymyxin resistance protein ArnA (660 aa).

Residues 1–304 (MKTVVFAYHD…TLGLVQGSRL (304 aa)) are formyltransferase ArnAFT. 86–88 (HLI) lines the (6R)-10-formyltetrahydrofolate pocket. Catalysis depends on His-104, which acts as the Proton donor; for formyltransferase activity. (6R)-10-formyltetrahydrofolate contacts are provided by residues Arg-114 and 136–140 (VKRAD). The interval 314–660 (RRTRVLILGV…RTVDLTDKPS (347 aa)) is dehydrogenase ArnADH. NAD(+) contacts are provided by residues Asp-347 and 368 to 369 (DI). Residues Ala-393, Tyr-398, and 432–433 (TS) each bind UDP-alpha-D-glucuronate. The Proton acceptor; for decarboxylase activity role is filled by Glu-434. UDP-alpha-D-glucuronate contacts are provided by residues Arg-460, Asn-492, 526 to 535 (KLIDGGKQKR), and Tyr-613. Arg-619 (proton donor; for decarboxylase activity) is an active-site residue.

It in the N-terminal section; belongs to the Fmt family. UDP-L-Ara4N formyltransferase subfamily. In the C-terminal section; belongs to the NAD(P)-dependent epimerase/dehydratase family. UDP-glucuronic acid decarboxylase subfamily. As to quaternary structure, homohexamer, formed by a dimer of trimers.

It carries out the reaction UDP-alpha-D-glucuronate + NAD(+) = UDP-beta-L-threo-pentopyranos-4-ulose + CO2 + NADH. The catalysed reaction is UDP-4-amino-4-deoxy-beta-L-arabinose + (6R)-10-formyltetrahydrofolate = UDP-4-deoxy-4-formamido-beta-L-arabinose + (6S)-5,6,7,8-tetrahydrofolate + H(+). It functions in the pathway nucleotide-sugar biosynthesis; UDP-4-deoxy-4-formamido-beta-L-arabinose biosynthesis; UDP-4-deoxy-4-formamido-beta-L-arabinose from UDP-alpha-D-glucuronate: step 1/3. The protein operates within nucleotide-sugar biosynthesis; UDP-4-deoxy-4-formamido-beta-L-arabinose biosynthesis; UDP-4-deoxy-4-formamido-beta-L-arabinose from UDP-alpha-D-glucuronate: step 3/3. It participates in bacterial outer membrane biogenesis; lipopolysaccharide biosynthesis. Functionally, bifunctional enzyme that catalyzes the oxidative decarboxylation of UDP-glucuronic acid (UDP-GlcUA) to UDP-4-keto-arabinose (UDP-Ara4O) and the addition of a formyl group to UDP-4-amino-4-deoxy-L-arabinose (UDP-L-Ara4N) to form UDP-L-4-formamido-arabinose (UDP-L-Ara4FN). The modified arabinose is attached to lipid A and is required for resistance to polymyxin and cationic antimicrobial peptides. The chain is Bifunctional polymyxin resistance protein ArnA from Escherichia coli (strain K12 / MC4100 / BW2952).